Consider the following 273-residue polypeptide: UPF0380 protein YfjQ (273 aa).

It belongs to the UPF0380 family.

The sequence is that of UPF0380 protein YfjQ (yfjQ) from Escherichia coli (strain K12).